Consider the following 93-residue polypeptide: WAP four-disulfide core domain protein 13 (93 aa).

Positions 1–22 (MKPVLPLQFLVVFCLALQLVPG) are cleaved as a signal peptide. The WAP; atypical domain occupies 24 to 73 (PKQRVLKYILEPPPCISAPENCTHLCTMQEDCEKGFQCCSSFCGIVCSSE). 3 disulfide bridges follow: cysteine 45/cysteine 66, cysteine 49/cysteine 61, and cysteine 55/cysteine 70.

It is found in the secreted. Its function is as follows. Putative acid-stable proteinase inhibitor. The sequence is that of WAP four-disulfide core domain protein 13 (WFDC13) from Homo sapiens (Human).